Consider the following 511-residue polypeptide: Histidine ammonia-lyase (511 aa).

A cross-link (5-imidazolinone (Ala-Gly)) is located at residues 143-145 (ASG). Ser144 carries the post-translational modification 2,3-didehydroalanine (Ser).

This sequence belongs to the PAL/histidase family. In terms of processing, contains an active site 4-methylidene-imidazol-5-one (MIO), which is formed autocatalytically by cyclization and dehydration of residues Ala-Ser-Gly.

It localises to the cytoplasm. It carries out the reaction L-histidine = trans-urocanate + NH4(+). It functions in the pathway amino-acid degradation; L-histidine degradation into L-glutamate; N-formimidoyl-L-glutamate from L-histidine: step 1/3. This Vibrio cholerae serotype O1 (strain ATCC 39315 / El Tor Inaba N16961) protein is Histidine ammonia-lyase.